Here is a 263-residue protein sequence, read N- to C-terminus: 3-methyl-2-oxobutanoate hydroxymethyltransferase (263 aa).

Residues Asp-45 and Asp-84 each contribute to the Mg(2+) site. 3-methyl-2-oxobutanoate-binding positions include 45-46 (DS), Asp-84, and Lys-112. Glu-114 contacts Mg(2+). Glu-180 (proton acceptor) is an active-site residue.

It belongs to the PanB family. As to quaternary structure, homodecamer; pentamer of dimers. The cofactor is Mg(2+).

The protein localises to the cytoplasm. It catalyses the reaction 3-methyl-2-oxobutanoate + (6R)-5,10-methylene-5,6,7,8-tetrahydrofolate + H2O = 2-dehydropantoate + (6S)-5,6,7,8-tetrahydrofolate. It participates in cofactor biosynthesis; (R)-pantothenate biosynthesis; (R)-pantoate from 3-methyl-2-oxobutanoate: step 1/2. Functionally, catalyzes the reversible reaction in which hydroxymethyl group from 5,10-methylenetetrahydrofolate is transferred onto alpha-ketoisovalerate to form ketopantoate. In Klebsiella pneumoniae subsp. pneumoniae (strain ATCC 700721 / MGH 78578), this protein is 3-methyl-2-oxobutanoate hydroxymethyltransferase.